Here is a 62-residue protein sequence, read N- to C-terminus: Photosystem II reaction center protein Z (62 aa).

The next 2 membrane-spanning stretches (helical) occupy residues 8–28 (SVFALIILSFLLVIGVPVVLA) and 41–61 (FSGASLWIGLVFLVGILNSFI).

Belongs to the PsbZ family. PSII is composed of 1 copy each of membrane proteins PsbA, PsbB, PsbC, PsbD, PsbE, PsbF, PsbH, PsbI, PsbJ, PsbK, PsbL, PsbM, PsbT, PsbY, PsbZ, Psb30/Ycf12, at least 3 peripheral proteins of the oxygen-evolving complex and a large number of cofactors. It forms dimeric complexes.

It is found in the plastid. The protein localises to the chloroplast thylakoid membrane. May control the interaction of photosystem II (PSII) cores with the light-harvesting antenna, regulates electron flow through the 2 photosystem reaction centers. PSII is a light-driven water plastoquinone oxidoreductase, using light energy to abstract electrons from H(2)O, generating a proton gradient subsequently used for ATP formation. The polypeptide is Photosystem II reaction center protein Z (Staurastrum punctulatum (Green alga)).